Here is a 118-residue protein sequence, read N- to C-terminus: ATP synthase subunit c (118 aa).

2 helical membrane passes run A34 to G54 and M88 to A108.

The protein belongs to the ATPase C chain family. As to quaternary structure, F-type ATPases have 2 components, F(1) - the catalytic core - and F(0) - the membrane proton channel. F(1) has five subunits: alpha(3), beta(3), gamma(1), delta(1), epsilon(1). F(0) has three main subunits: a(1), b(2) and c(10-14). The alpha and beta chains form an alternating ring which encloses part of the gamma chain. F(1) is attached to F(0) by a central stalk formed by the gamma and epsilon chains, while a peripheral stalk is formed by the delta and b chains.

The protein localises to the cell inner membrane. Functionally, f(1)F(0) ATP synthase produces ATP from ADP in the presence of a proton or sodium gradient. F-type ATPases consist of two structural domains, F(1) containing the extramembraneous catalytic core and F(0) containing the membrane proton channel, linked together by a central stalk and a peripheral stalk. During catalysis, ATP synthesis in the catalytic domain of F(1) is coupled via a rotary mechanism of the central stalk subunits to proton translocation. In terms of biological role, key component of the F(0) channel; it plays a direct role in translocation across the membrane. A homomeric c-ring of between 10-14 subunits forms the central stalk rotor element with the F(1) delta and epsilon subunits. The protein is ATP synthase subunit c of Syntrophus aciditrophicus (strain SB).